The chain runs to 511 residues: Glucans biosynthesis protein G (511 aa).

A signal peptide spans Met1–Ala22.

It belongs to the OpgD/OpgG family.

The protein resides in the periplasm. It participates in glycan metabolism; osmoregulated periplasmic glucan (OPG) biosynthesis. Involved in the biosynthesis of osmoregulated periplasmic glucans (OPGs). The sequence is that of Glucans biosynthesis protein G from Escherichia coli (strain K12 / MC4100 / BW2952).